Consider the following 155-residue polypeptide: Small ribosomal subunit protein uS7 (155 aa).

This sequence belongs to the universal ribosomal protein uS7 family. Part of the 30S ribosomal subunit. Contacts proteins S9 and S11.

In terms of biological role, one of the primary rRNA binding proteins, it binds directly to 16S rRNA where it nucleates assembly of the head domain of the 30S subunit. Is located at the subunit interface close to the decoding center, probably blocks exit of the E-site tRNA. The polypeptide is Small ribosomal subunit protein uS7 (Chloroherpeton thalassium (strain ATCC 35110 / GB-78)).